Reading from the N-terminus, the 428-residue chain is Adenylosuccinate synthetase (428 aa).

GTP contacts are provided by residues Gly-12 to Lys-18 and Gly-40 to Thr-42. Catalysis depends on Asp-13, which acts as the Proton acceptor. Mg(2+)-binding residues include Asp-13 and Gly-40. Residues Asp-13–Lys-16, Asn-38–His-41, Thr-127, Arg-141, Gln-222, Thr-237, and Arg-301 each bind IMP. His-41 serves as the catalytic Proton donor. Thr-297–Arg-303 lines the substrate pocket. GTP-binding positions include Arg-303, Cys-329–Asp-331, and Ser-411–Gly-413.

It belongs to the adenylosuccinate synthetase family. Homodimer. The cofactor is Mg(2+).

Its subcellular location is the cytoplasm. The enzyme catalyses IMP + L-aspartate + GTP = N(6)-(1,2-dicarboxyethyl)-AMP + GDP + phosphate + 2 H(+). It participates in purine metabolism; AMP biosynthesis via de novo pathway; AMP from IMP: step 1/2. In terms of biological role, plays an important role in the de novo pathway of purine nucleotide biosynthesis. Catalyzes the first committed step in the biosynthesis of AMP from IMP. This Levilactobacillus brevis (strain ATCC 367 / BCRC 12310 / CIP 105137 / JCM 1170 / LMG 11437 / NCIMB 947 / NCTC 947) (Lactobacillus brevis) protein is Adenylosuccinate synthetase.